Consider the following 1193-residue polypeptide: Protogenin (1193 aa).

The first 23 residues, 1–23 (MAPPVRPGMLPLLLLLLLPPLGS), serve as a signal peptide directing secretion. 4 consecutive Ig-like domains span residues 24-124 (VPGV…AHLT), 126-217 (STIS…ASLT), 230-317 (PTII…ATLT), and 322-406 (PSFV…ARLT). Residues 24–944 (VPGVWSFSEL…YYHLDQKSMT (921 aa)) lie on the Extracellular side of the membrane. 2 disulfide bridges follow: C54–C107 and C150–C200. N84 is a glycosylation site (N-linked (GlcNAc...) asparagine). N-linked (GlcNAc...) asparagine glycosylation occurs at N238. 2 disulfide bridges follow: C251–C299 and C343–C390. Fibronectin type-III domains follow at residues 416–510 (APYN…TLED), 512–608 (PLRP…TPKA), 613–712 (APKS…VRDR), 719–812 (PPHH…TLPE), and 817–912 (PPVG…VLPK). N625 carries N-linked (GlcNAc...) asparagine glycosylation. Residues 945–965 (GIAVGVGIALTCILICVLILI) form a helical membrane-spanning segment. At 966–1193 (YRSKARKSSA…LRHAAESVPV (228 aa)) the chain is on the cytoplasmic side. Disordered regions lie at residues 974–1018 (SASK…PMMP) and 1078–1193 (VLIS…SVPV). Polar residues-rich tracts occupy residues 978–990 (TTQS…SRAS) and 1086–1095 (PSSPGQTTSF). The span at 1105-1133 (DTEHSANSEGSHETGDSGRFSHESNDEIH) shows a compositional bias: basic and acidic residues. Residues 1136–1150 (SVISSTPPTSNSLTC) show a composition bias toward polar residues.

Belongs to the immunoglobulin superfamily. DCC family.

The protein resides in the membrane. Its function is as follows. May play a role in anteroposterior axis elongation. The polypeptide is Protogenin (Rattus norvegicus (Rat)).